Consider the following 438-residue polypeptide: Cysteine--tRNA ligase (438 aa).

Cys-28 is a binding site for Zn(2+). Positions 30-40 (PTVYNHLHLGN) match the 'HIGH' region motif. 3 residues coordinate Zn(2+): Cys-207, His-232, and Glu-236. The short motif at 264–268 (KMSKS) is the 'KMSKS' region element. ATP is bound at residue Lys-267.

Belongs to the class-I aminoacyl-tRNA synthetase family. In terms of assembly, monomer. It depends on Zn(2+) as a cofactor.

The protein localises to the cytoplasm. It catalyses the reaction tRNA(Cys) + L-cysteine + ATP = L-cysteinyl-tRNA(Cys) + AMP + diphosphate. The chain is Cysteine--tRNA ligase from Aster yellows witches'-broom phytoplasma (strain AYWB).